Consider the following 302-residue polypeptide: MSDSRRVPITFQGLIQTLNQYWAEQGCVLIQPLDLEVGAGTFHPATFLRALGPEPWNAAYVQPSRRPTDGRYGENPNRLQRYYQYQVAMKPNPDNIQDLYLGSLQALGIDPLVHDLRFVEDNWESPTLGAWGLGWEVWLNGMEVTQFTYFQQAGGLECKPVLGEITYGLERLCMYLQSCDNVYELVWTYGPDGAAVTYGDVYHQNEVEQSTYNFEHANVAELFHRFDACEAEARHLVEVGLPLPAYEQVTKASHAFNLLDARRAISVTERQRYILRVRALAQGVAQAYYAQREKLGFPGVKK.

This sequence belongs to the class-II aminoacyl-tRNA synthetase family. In terms of assembly, tetramer of two alpha and two beta subunits.

The protein resides in the cytoplasm. It carries out the reaction tRNA(Gly) + glycine + ATP = glycyl-tRNA(Gly) + AMP + diphosphate. The sequence is that of Glycine--tRNA ligase alpha subunit from Xanthomonas euvesicatoria pv. vesicatoria (strain 85-10) (Xanthomonas campestris pv. vesicatoria).